Reading from the N-terminus, the 882-residue chain is Alanine--tRNA ligase (882 aa).

Zn(2+)-binding residues include His574, His578, Cys682, and His686. The disordered stretch occupies residues 853–882 (GGRGGGKGALAQGGGLDPRKAREALPGLLP). Residues 854 to 868 (GRGGGKGALAQGGGL) show a composition bias toward gly residues.

The protein belongs to the class-II aminoacyl-tRNA synthetase family. It depends on Zn(2+) as a cofactor.

It is found in the cytoplasm. The enzyme catalyses tRNA(Ala) + L-alanine + ATP = L-alanyl-tRNA(Ala) + AMP + diphosphate. In terms of biological role, catalyzes the attachment of alanine to tRNA(Ala) in a two-step reaction: alanine is first activated by ATP to form Ala-AMP and then transferred to the acceptor end of tRNA(Ala). Also edits incorrectly charged Ser-tRNA(Ala) and Gly-tRNA(Ala) via its editing domain. The sequence is that of Alanine--tRNA ligase from Thermus thermophilus (strain ATCC 27634 / DSM 579 / HB8).